Reading from the N-terminus, the 400-residue chain is UDP-glucuronate:glycolipid 2-beta-glucuronosyltransferase (400 aa).

Catalysis depends on Asp157, which acts as the Proton acceptor. UDP-alpha-D-glucuronate-binding positions include 230–231 (SM), 272–273 (EM), Tyr292, and 306–310 (MKLLQ). The disordered stretch occupies residues 377 to 400 (PETRLYPHPPTAAPQLSSEAALSH). Residues 390-400 (PQLSSEAALSH) are compositionally biased toward polar residues.

The protein belongs to the glycosyltransferase 70 family.

It localises to the cell inner membrane. It catalyses the reaction alpha-D-Man-(1-&gt;3)-beta-D-Glc-(1-&gt;4)-alpha-D-Glc-1-di-trans,octa-cis-undecaprenyl diphosphate + UDP-alpha-D-glucuronate = beta-D-GlcA-(1-&gt;2)-alpha-D-Man-(1-&gt;3)-beta-D-Glc-(1-&gt;4)-alpha-D-Glc-di-trans,octa-cis-undecaprenyl diphosphate + UDP + H(+). Its pathway is glycan biosynthesis; xanthan biosynthesis. In terms of biological role, catalyzes the transfer of a glucuronic acid (GlcA) residue from UDP-glucuronate to mannose-alpha-1,3-glucose-beta-1,4-glucose-P-P-polyisoprenyl to form the lipid-linked tetrasaccharide GlcA-Man-Glc(2)-PP-Pol, with a glucuronic acid-beta-mannose linkage. Is involved in the biosynthesis of the exopolysaccharide xanthan, since it catalyzes the fourth glycosylation step in the assembly of the pentasaccharide-P-P-polyisoprenyl repeating unit of xanthan. Is unable to use the trisaccharide acceptor freed from the pyrophosphate lipid moiety. Does not show specificity for the lipidic portion of the acceptor. Shows diminished activity when tested with 6-O-acetyl-mannose-alpha-1,3-glucose-beta-1,4-glucose-P-P-polyisoprenyl, a putative intermediate in the synthesis of xanthan; this could indicate that acetylation of the internal mannose takes place after the formation of the GumK product. This chain is UDP-glucuronate:glycolipid 2-beta-glucuronosyltransferase (gumK), found in Xanthomonas campestris pv. campestris.